The chain runs to 384 residues: Probable endopolygalacturonase C (384 aa).

The first 19 residues, 1–19, serve as a signal peptide directing secretion; the sequence is MVRQLALACGLLAAVAVQA. Positions 20–40 are excised as a propeptide; the sequence is APAEPAHPMVTEAPDASLLHK. Cys45 and Cys63 are oxidised to a cystine. 2 PbH1 repeats span residues 176-207 and 208-229; these read ATDLTLTDITIDNTDGDTDDLAANTDGFDIGE and STDITITGAKVYNQDDCVAINS. The active-site Proton donor is the Asp222. An intrachain disulfide couples Cys224 to Cys240. The active site involves His244. PbH1 repeat units follow at residues 254-280 and 288-310; these read RDDNTVKNVTFYDVNVLKSQQAIRIKA and ISDITYHEIAFSDATDYGIVIEQ. N-linked (GlcNAc...) asparagine glycosylation is present at Asn261. Cystine bridges form between Cys349/Cys354 and Cys373/Cys382.

This sequence belongs to the glycosyl hydrolase 28 family.

It is found in the secreted. The enzyme catalyses (1,4-alpha-D-galacturonosyl)n+m + H2O = (1,4-alpha-D-galacturonosyl)n + (1,4-alpha-D-galacturonosyl)m.. Functionally, involved in maceration and soft-rotting of plant tissue. Hydrolyzes the 1,4-alpha glycosidic bonds of de-esterified pectate in the smooth region of the plant cell wall. This is Probable endopolygalacturonase C (pgaC) from Aspergillus aculeatus.